We begin with the raw amino-acid sequence, 273 residues long: UPF0173 metal-dependent hydrolase Bpro_4324 (273 aa).

It belongs to the UPF0173 family.

The chain is UPF0173 metal-dependent hydrolase Bpro_4324 from Polaromonas sp. (strain JS666 / ATCC BAA-500).